A 160-amino-acid polypeptide reads, in one-letter code: Inorganic pyrophosphatase (160 aa).

Substrate-binding residues include Lys-16, Arg-28, and Tyr-40. Mg(2+) contacts are provided by Asp-50, Asp-55, and Asp-87. Position 126 (Tyr-126) interacts with substrate.

This sequence belongs to the PPase family. In terms of assembly, homohexamer. It depends on Mg(2+) as a cofactor.

The protein resides in the cytoplasm. It catalyses the reaction diphosphate + H2O = 2 phosphate + H(+). In terms of biological role, catalyzes the hydrolysis of inorganic pyrophosphate (PPi) forming two phosphate ions. In Nanoarchaeum equitans (strain Kin4-M), this protein is Inorganic pyrophosphatase.